The primary structure comprises 344 residues: Fe-S cluster assembly protein DRE2 (344 aa).

Residues 1 to 160 are N-terminal SAM-like domain; it reads MTSNILLLLH…KKLNNDNAST (160 aa). The segment at 154–179 is disordered; it reads NNDNASTPGLTDSSAGTSEDETATVS. The segment covering 155-170 has biased composition (polar residues); that stretch reads NDNASTPGLTDSSAGT. The linker stretch occupies residues 161–223; the sequence is PGLTDSSAGT…NDLIAESNKY (63 aa). [2Fe-2S] cluster contacts are provided by cysteine 231, cysteine 243, cysteine 246, and cysteine 248. A fe-S binding site A region spans residues 231 to 248; that stretch reads CELPNGKKRKKACKDCTC. Residues cysteine 313, cysteine 316, cysteine 324, and cysteine 327 each coordinate [4Fe-4S] cluster. 2 short sequence motifs (cx2C motif) span residues 313 to 316 and 324 to 327; these read CGSC and CDGC. A fe-S binding site B region spans residues 313–327; that stretch reads CGSCSLGDAFRCDGC.

Belongs to the anamorsin family. In terms of assembly, monomer. Interacts with TAH18. Interacts with MIA40. Requires [2Fe-2S] cluster as cofactor. [4Fe-4S] cluster serves as cofactor.

Its subcellular location is the cytoplasm. It is found in the mitochondrion intermembrane space. Component of the cytosolic iron-sulfur (Fe-S) protein assembly (CIA) machinery required for the maturation of extramitochondrial Fe-S proteins. Part of an electron transfer chain functioning in an early step of cytosolic Fe-S biogenesis, facilitating the de novo assembly of a [4Fe-4S] cluster on the scaffold complex CFD1-NBP35. Electrons are transferred to DRE2 from NADPH via the FAD- and FMN-containing protein TAH18. TAH18-DRE2 are also required for the assembly of the diferric tyrosyl radical cofactor of ribonucleotide reductase (RNR), probably by providing electrons for reduction during radical cofactor maturation in the catalytic small subunit RNR2. The polypeptide is Fe-S cluster assembly protein DRE2 (Candida tropicalis (strain ATCC MYA-3404 / T1) (Yeast)).